Consider the following 313-residue polypeptide: GTP cyclohydrolase MptA (313 aa).

This sequence belongs to the GTP cyclohydrolase IV family. In terms of assembly, homodimer. Fe(2+) serves as cofactor.

The catalysed reaction is GTP + H2O = 7,8-dihydroneopterin 2',3'-cyclic phosphate + formate + diphosphate + H(+). It participates in cofactor biosynthesis; 5,6,7,8-tetrahydromethanopterin biosynthesis. Converts GTP to 7,8-dihydro-D-neopterin 2',3'-cyclic phosphate, the first intermediate in the biosynthesis of coenzyme methanopterin. This chain is GTP cyclohydrolase MptA, found in Methanosphaera stadtmanae (strain ATCC 43021 / DSM 3091 / JCM 11832 / MCB-3).